Consider the following 370-residue polypeptide: Putative phosphoserine aminotransferase (370 aa).

The interval 1 to 22 is disordered; it reads MAELTIPADLKPRDGRFGSGPS. R44 provides a ligand contact to L-glutamate. The pyridoxal 5'-phosphate site is built by F102, T148, D170, and Q193. At K194 the chain carries N6-(pyridoxal phosphate)lysine. 245 to 246 contacts pyridoxal 5'-phosphate; that stretch reads NT.

This sequence belongs to the class-V pyridoxal-phosphate-dependent aminotransferase family. SerC subfamily. In terms of assembly, homodimer. Pyridoxal 5'-phosphate is required as a cofactor.

It localises to the cytoplasm. The enzyme catalyses O-phospho-L-serine + 2-oxoglutarate = 3-phosphooxypyruvate + L-glutamate. It catalyses the reaction 4-(phosphooxy)-L-threonine + 2-oxoglutarate = (R)-3-hydroxy-2-oxo-4-phosphooxybutanoate + L-glutamate. Its pathway is amino-acid biosynthesis; L-serine biosynthesis; L-serine from 3-phospho-D-glycerate: step 2/3. The protein operates within cofactor biosynthesis; pyridoxine 5'-phosphate biosynthesis; pyridoxine 5'-phosphate from D-erythrose 4-phosphate: step 3/5. Its function is as follows. Catalyzes the reversible conversion of 3-phosphohydroxypyruvate to phosphoserine and of 3-hydroxy-2-oxo-4-phosphonooxybutanoate to phosphohydroxythreonine. The sequence is that of Putative phosphoserine aminotransferase from Mycobacterium sp. (strain JLS).